Here is a 192-residue protein sequence, read N- to C-terminus: UPF0301 protein Bcen_0382 (192 aa).

It belongs to the UPF0301 (AlgH) family.

The polypeptide is UPF0301 protein Bcen_0382 (Burkholderia orbicola (strain AU 1054)).